The sequence spans 485 residues: Phenylalanine--tRNA ligase alpha subunit, cytoplasmic (485 aa).

L-phenylalanine contacts are provided by residues Thr318, 360–362 (QIE), and Tyr400. Position 402 (Glu402) interacts with Mg(2+). Phe426 contacts L-phenylalanine.

The protein belongs to the class-II aminoacyl-tRNA synthetase family. Phe-tRNA synthetase alpha subunit type 2 subfamily. As to quaternary structure, tetramer of two alpha and two beta subunits. Mg(2+) serves as cofactor.

It is found in the cytoplasm. The protein resides in the cytosol. It carries out the reaction tRNA(Phe) + L-phenylalanine + ATP = L-phenylalanyl-tRNA(Phe) + AMP + diphosphate + H(+). The chain is Phenylalanine--tRNA ligase alpha subunit, cytoplasmic from Arabidopsis thaliana (Mouse-ear cress).